We begin with the raw amino-acid sequence, 191 residues long: Probable nicotinate-nucleotide adenylyltransferase (191 aa).

This sequence belongs to the NadD family.

It carries out the reaction nicotinate beta-D-ribonucleotide + ATP + H(+) = deamido-NAD(+) + diphosphate. It functions in the pathway cofactor biosynthesis; NAD(+) biosynthesis; deamido-NAD(+) from nicotinate D-ribonucleotide: step 1/1. In terms of biological role, catalyzes the reversible adenylation of nicotinate mononucleotide (NaMN) to nicotinic acid adenine dinucleotide (NaAD). The protein is Probable nicotinate-nucleotide adenylyltransferase of Oceanobacillus iheyensis (strain DSM 14371 / CIP 107618 / JCM 11309 / KCTC 3954 / HTE831).